The primary structure comprises 226 residues: ATP-dependent dethiobiotin synthetase BioD (226 aa).

12 to 17 is an ATP binding site; sequence GVGKTV. Residue Thr16 participates in Mg(2+) binding. The active site involves Lys37. Residue Thr41 participates in substrate binding. ATP is bound by residues Asp49, 108–111, and 197–199; these read EGAG and PAG. Mg(2+) contacts are provided by Asp49 and Glu108.

This sequence belongs to the dethiobiotin synthetase family. In terms of assembly, homodimer. The cofactor is Mg(2+).

The protein localises to the cytoplasm. The enzyme catalyses (7R,8S)-7,8-diammoniononanoate + CO2 + ATP = (4R,5S)-dethiobiotin + ADP + phosphate + 3 H(+). The protein operates within cofactor biosynthesis; biotin biosynthesis; biotin from 7,8-diaminononanoate: step 1/2. In terms of biological role, catalyzes a mechanistically unusual reaction, the ATP-dependent insertion of CO2 between the N7 and N8 nitrogen atoms of 7,8-diaminopelargonic acid (DAPA, also called 7,8-diammoniononanoate) to form a ureido ring. In Mycobacterium avium (strain 104), this protein is ATP-dependent dethiobiotin synthetase BioD.